The sequence spans 856 residues: FO synthase (856 aa).

Radical SAM core domains follow at residues 84–336 (ISYS…APPN) and 544–785 (VTFV…SHIQ). Residues 85 to 417 (SYSRKVFIPV…PRVRGHVVAL (333 aa)) form a cofG-like region. Residues C98, C102, C105, C558, C562, and C565 each contribute to the [4Fe-4S] cluster site. The segment at 521-854 (DGPALEAVAA…RQRTTTYALL (334 aa)) is cofH-like.

The protein in the N-terminal section; belongs to the radical SAM superfamily. CofG family. It in the C-terminal section; belongs to the radical SAM superfamily. CofH family. It depends on [4Fe-4S] cluster as a cofactor.

The enzyme catalyses 5-amino-6-(D-ribitylamino)uracil + L-tyrosine + S-adenosyl-L-methionine = 5-amino-5-(4-hydroxybenzyl)-6-(D-ribitylimino)-5,6-dihydrouracil + 2-iminoacetate + 5'-deoxyadenosine + L-methionine + H(+). The catalysed reaction is 5-amino-5-(4-hydroxybenzyl)-6-(D-ribitylimino)-5,6-dihydrouracil + S-adenosyl-L-methionine = 7,8-didemethyl-8-hydroxy-5-deazariboflavin + 5'-deoxyadenosine + L-methionine + NH4(+) + H(+). Its pathway is cofactor biosynthesis; coenzyme F0 biosynthesis. Its function is as follows. Catalyzes the radical-mediated synthesis of 7,8-didemethyl-8-hydroxy-5-deazariboflavin (FO) from 5-amino-6-(D-ribitylamino)uracil and L-tyrosine. This is FO synthase (fbiC) from Mycobacterium bovis (strain ATCC BAA-935 / AF2122/97).